The following is a 776-amino-acid chain: Disintegrin and metalloproteinase domain-containing protein 28 (776 aa).

A signal peptide spans 1–19 (MLQALLTVSLLLSPVPVSA). Positions 20 to 193 (IKELPGVKKY…IARPATRLVK (174 aa)) are excised as a propeptide. The short motif at 168-175 (STCGTDGV) is the Cysteine switch element. Position 170 (Cys170) interacts with Zn(2+). At 194–666 (LNDGKVQKHE…CDDSSVVFYF (473 aa)) the chain is on the extracellular side. The Peptidase M12B domain occupies 204-400 (KYIEYYLVLD…KLSNCLFNAP (197 aa)). N-linked (GlcNAc...) asparagine glycosylation is found at Asn268 and Asn275. 4 cysteine pairs are disulfide-bonded: Cys315–Cys395, Cys355–Cys379, Cys357–Cys362, and Cys466–Cys486. Position 340 (His340) interacts with Zn(2+). Glu341 is a catalytic residue. Zn(2+) is bound by residues His344 and His350. A glycan (N-linked (GlcNAc...) asparagine) is linked at Asn352. Residues 408-494 (TPICGNQMVE…NCPDDRFRAN (87 aa)) form the Disintegrin domain. Residues Asn558, Asn603, and Asn629 are each glycosylated (N-linked (GlcNAc...) asparagine). The 33-residue stretch at 626–658 (KSTNCSSKCKGHAVCDHELQCQCEEGWSPPDCD) folds into the EGF-like domain. Cystine bridges form between Cys630–Cys640, Cys634–Cys646, and Cys648–Cys657. The helical transmembrane segment at 667 to 687 (SIVVAVLFPVAVISLVVAIVI) threads the bilayer. Topologically, residues 688–776 (RQQSSREKQK…SSFLDSNPKA (89 aa)) are cytoplasmic. The segment covering 691-701 (SSREKQKKDQR) has biased composition (basic and acidic residues). Disordered regions lie at residues 691–728 (SSRE…PQEM) and 746–776 (PASF…NPKA). The span at 709-718 (RPHKQKRKPQ) shows a compositional bias: basic residues.

Zn(2+) serves as cofactor. Pro-domain removal and maturation may be, at least in part, autocatalytic. Expressed at high levels in epididymis and at lower levels in lung.

The protein localises to the membrane. May play a role in the adhesive and proteolytic events that occur during lymphocyte emigration or may function in ectodomain shedding of lymphocyte surface target proteins, such as FASL and CD40L. May be involved in sperm maturation. The polypeptide is Disintegrin and metalloproteinase domain-containing protein 28 (ADAM28) (Macaca fascicularis (Crab-eating macaque)).